The chain runs to 846 residues: Patched domain-containing protein 4 (846 aa).

The next 10 membrane-spanning stretches (helical) occupy residues 41–61 (HPVF…LSAL), 230–250 (SILA…TATL), 265–285 (GLLG…IFFI), 293–313 (TLLG…FELL), 336–356 (VMVT…MGAS), 373–393 (VSIL…LVFA), 465–485 (PFVV…CLQI), 660–680 (PVLI…FLVI), 686–706 (FWLI…MTLW), and 718–738 (LIYT…TFVL). Residues 233 to 392 (ARSKVLVSLV…FSFFGSCLVF (160 aa)) enclose the SSD domain. N762 carries N-linked (GlcNAc...) asparagine glycosylation. 2 helical membrane-spanning segments follow: residues 765–785 (SFLI…FTLF) and 787–807 (CLLL…PVFL).

It belongs to the patched family.

Its subcellular location is the membrane. Could act as a repressor of canonical hedgehog signaling by antagonizing the effects of SMO, as suggested by down-regulation of hedgehog target genes, including GLI1, PTCH1, and PTCH2 in PTCHD4-expressing cells. In Homo sapiens (Human), this protein is Patched domain-containing protein 4 (PTCHD4).